Here is a 397-residue protein sequence, read N- to C-terminus: MARAPLDWIDRELEALEAKGLRRALEPLASPQGPVVEVGGRRLVNLCSNDYLGLAADPRLRSAAAEAAEREGAGSGASRLVAGDLPVHGALERAIAGHAGTEAALLFGSGYHANAGVPPALVGRDDAVFSDVLNHASIVDGCLLSRAKLVRYRHADVQELADLLAGTPARRKLVVTDAIFSMDGDAAPLREIAGLCDRHGAMLYVDEAHATGVLGPRGGGLAEALGVADRVDVHMGTLGKALGAAGAFVAGERRLVDLLVSRARTFVFTTAPAPAASAAALAALAIVEAEPERRARVLALAARMRVGLERLGFDVSRVAAPIFPVILGDEARAVAASRALRERGFFVRAIRPPTVPRGTSRLRVTLTAAHGEAQVDAFLGALEEVLRVPGGGAPRVL.

R23 is a binding site for substrate. Pyridoxal 5'-phosphate is bound at residue 110-111 (GY). Residue H135 coordinates substrate. The pyridoxal 5'-phosphate site is built by S181, H209, and T237. K240 is modified (N6-(pyridoxal phosphate)lysine). Residue T354 coordinates substrate.

The protein belongs to the class-II pyridoxal-phosphate-dependent aminotransferase family. BioF subfamily. As to quaternary structure, homodimer. Pyridoxal 5'-phosphate serves as cofactor.

It carries out the reaction 6-carboxyhexanoyl-[ACP] + L-alanine + H(+) = (8S)-8-amino-7-oxononanoate + holo-[ACP] + CO2. It participates in cofactor biosynthesis; biotin biosynthesis. In terms of biological role, catalyzes the decarboxylative condensation of pimeloyl-[acyl-carrier protein] and L-alanine to produce 8-amino-7-oxononanoate (AON), [acyl-carrier protein], and carbon dioxide. This Anaeromyxobacter sp. (strain Fw109-5) protein is 8-amino-7-oxononanoate synthase.